The following is a 121-amino-acid chain: UPF0102 protein Xfasm12_1748 (121 aa).

The protein belongs to the UPF0102 family.

This is UPF0102 protein Xfasm12_1748 from Xylella fastidiosa (strain M12).